We begin with the raw amino-acid sequence, 57 residues long: Small ribosomal subunit protein bS21 (57 aa).

The interval 35 to 57 (RERYEKPSLRRKRKQEAARKRNR) is disordered.

Belongs to the bacterial ribosomal protein bS21 family.

The polypeptide is Small ribosomal subunit protein bS21 (Thermosynechococcus vestitus (strain NIES-2133 / IAM M-273 / BP-1)).